We begin with the raw amino-acid sequence, 1876 residues long: 1,3-beta-glucan synthase component FKS1 (1876 aa).

Polar residues-rich tracts occupy residues 1–25 (MNTD…QSQE) and 60–71 (QPPNESYDQDYT). The tract at residues 1–108 (MNTDQQPYQG…PGTPGYDSYG (108 aa)) is disordered. Residues 1 to 454 (MNTDQQPYQG…WLHLVTNFNR (454 aa)) are Cytoplasmic-facing. A Glycyl lysine isopeptide (Lys-Gly) (interchain with G-Cter in ubiquitin) cross-link involves residue lysine 259. 2 positions are modified to phosphothreonine: threonine 269 and threonine 272. Residues lysine 275 and lysine 386 each participate in a glycyl lysine isopeptide (Lys-Gly) (interchain with G-Cter in ubiquitin) cross-link. The helical transmembrane segment at 455–475 (IWVMHISIFWMYFAYNSPTFY) threads the bilayer. The Extracellular portion of the chain corresponds to 476–492 (THNYQQLVDNQPLAAYK). The helical transmembrane segment at 493 to 513 (WASCALGGTVASLIQIVATLC) threads the bilayer. The Cytoplasmic segment spans residues 514-531 (EWSFVPRKWAGAQHLSRR). A helical transmembrane segment spans residues 532 to 552 (FWFLCIIFGINLGPIIFVFAY). Topologically, residues 553 to 563 (DKDTVYSTAAH) are extracellular. A helical transmembrane segment spans residues 564–584 (VVAAVMFFVAVATIIFFSIMP). Topologically, residues 585–621 (LGGLFTSYMKKSTRRYVASQTFTAAFAPLHGLDRWMS) are cytoplasmic. A helical transmembrane segment spans residues 622–642 (YLVWVTVFAAKYSESYYFLVL). Residues 643-678 (SLRDPIRILSTTAMRCTGEYWWGAVLCKVQPKIVLG) are Extracellular-facing. A helical transmembrane segment spans residues 679-699 (LVIATDFILFFLDTYLWYIIV). Over 700–1358 (NTIFSVGKSF…QPAVDWVRRY (659 aa)) the chain is Cytoplasmic. Glycyl lysine isopeptide (Lys-Gly) (interchain with G-Cter in ubiquitin) cross-links involve residues lysine 910 and lysine 915. A helical membrane pass occupies residues 1359–1379 (TLSIFIVFWIAFVPIVVQELI). Residues 1380 to 1444 (ERGLWKATQR…RIPFSILYSR (65 aa)) are Extracellular-facing. Residues 1445–1465 (FAGSAIYMGARSMLMLLFGTV) traverse the membrane as a helical segment. The Cytoplasmic segment spans residues 1466 to 1469 (AHWQ). A helical membrane pass occupies residues 1470–1490 (APLLWFWASLSSLIFAPFVFN). At 1491–1560 (PHQFAWEDFF…DASRAHRTNL (70 aa)) the chain is on the extracellular side. Residues lysine 1539 and lysine 1547 each participate in a glycyl lysine isopeptide (Lys-Gly) (interchain with G-Cter in ubiquitin) cross-link. Residues 1561–1581 (IMAEIIPCAIYAAGCFIAFTF) form a helical membrane-spanning segment. At 1582–1601 (INAQTGVKTTDDDRVNSVLR) the chain is on the cytoplasmic side. A helical membrane pass occupies residues 1602 to 1622 (IIICTLAPIAVNLGVLFFCMG). Over 1623-1643 (MSCCSGPLFGMCCKKTGSVMA) the chain is Extracellular. A helical transmembrane segment spans residues 1644–1664 (GIAHGVAVIVHIAFFIVMWVL). The Cytoplasmic segment spans residues 1665-1672 (ESFNFVRM). The helical transmembrane segment at 1673 to 1695 (LIGVVTCIQCQRLIFHCMTALML) threads the bilayer. Topologically, residues 1696–1802 (TREFKNDHAN…RKRMVKKYCS (107 aa)) are extracellular. Residues 1803–1823 (LYFLVLAIFAGCIIGPAVASA) traverse the membrane as a helical segment. Topologically, residues 1824–1876 (KIHKHIGDSLDGVVHNLFQPINTTNNDTGSQMSTYQSHYYTHTPSLKTWSTIK) are cytoplasmic.

This sequence belongs to the glycosyltransferase 48 family. As to quaternary structure, component of the 1,3-beta-glucan synthase (GS) complex, composed of two alternate catalytic subunits FKS1 or GSC2, and a regulatory subunit RHO1. Interacts with RHO1, which is a GTP-binding protein.

The protein localises to the mitochondrion. It is found in the cell membrane. It catalyses the reaction [(1-&gt;3)-beta-D-glucosyl](n) + UDP-alpha-D-glucose = [(1-&gt;3)-beta-D-glucosyl](n+1) + UDP + H(+). Alternate catalytic subunit of the 1,3-beta-glucan synthase (GS) complex. Synthesizes 1,3-beta-glucan, a major structural component of the yeast cell wall. Involved in cell wall synthesis, maintenance and remodeling. This Saccharomyces cerevisiae (strain ATCC 204508 / S288c) (Baker's yeast) protein is 1,3-beta-glucan synthase component FKS1 (FKS1).